The primary structure comprises 335 residues: 2,4-dienoyl-CoA reductase [(3E)-enoyl-CoA-producing], mitochondrial (335 aa).

Residues M1–Q34 constitute a mitochondrion transit peptide. N6-acetyllysine; alternate occurs at positions 42 and 49. 2 positions are modified to N6-succinyllysine; alternate: K42 and K49. Residue G66 to L71 participates in NADP(+) binding. T69 is subject to Phosphothreonine. At K73 the chain carries N6-succinyllysine. R91 serves as a coordination point for NADP(+). Substrate is bound at residue R91. Position 97 is an N6-acetyllysine; alternate (K97). At K97 the chain carries N6-succinyllysine; alternate. D117 is an NADP(+) binding site. R119, F149, and S157 together coordinate substrate. Residue Y199 is the Proton acceptor of the active site. K214 contacts NADP(+). N6-acetyllysine is present on K230. P240–I243 serves as a coordination point for NADP(+). Position 244 is an N6-acetyllysine; alternate (K244). K244 is modified (N6-succinyllysine; alternate). Substrate is bound at residue R251. N6-acetyllysine; alternate is present on residues K260 and K319. K260 and K319 each carry N6-succinyllysine; alternate.

This sequence belongs to the short-chain dehydrogenases/reductases (SDR) family. 2,4-dienoyl-CoA reductase subfamily. As to quaternary structure, homotetramer. As to expression, heart = liver = pancreas &gt; kidney &gt;&gt; skeletal muscle = lung.

The protein localises to the mitochondrion. The enzyme catalyses a (2E,4E)-dienoyl-CoA + NADPH + H(+) = a 4,5-saturated-(3E)-enoyl-CoA + NADP(+). The catalysed reaction is a (2E,4Z)-dienoyl-CoA + NADPH + H(+) = a 4,5-saturated-(3E)-enoyl-CoA + NADP(+). It carries out the reaction (2E,4E)-hexadienoyl-CoA + NADPH + H(+) = (3E)-hexenoyl-CoA + NADP(+). Functionally, auxiliary enzyme of beta-oxidation. It participates in the metabolism of unsaturated fatty enoyl-CoA esters having double bonds in both even- and odd-numbered positions in mitochondria. Catalyzes the NADP-dependent reduction of 2,4-dienoyl-CoA to yield trans-3-enoyl-CoA. This is 2,4-dienoyl-CoA reductase [(3E)-enoyl-CoA-producing], mitochondrial (DECR1) from Homo sapiens (Human).